The sequence spans 2345 residues: Acetyl-CoA carboxylase 1 (2345 aa).

Methionine 1 is subject to N-acetylmethionine. A phosphoserine mark is found at serine 5, serine 23, serine 25, serine 29, serine 34, serine 47, serine 49, and serine 52. Threonine 57 bears the Phosphothreonine mark. Residues serine 77 and serine 79 each carry the phosphoserine modification. The residue at position 79 (serine 79) is a Phosphoserine; by AMPK. The 502-residue stretch at 116–617 (VIEKVLIANN…DTGWLDRLIA (502 aa)) folds into the Biotin carboxylation domain. Residues 274–465 (SKRILNVPQD…LPAAQLQIAM (192 aa)) form the ATP-grasp domain. 300 to 357 (AEEVGYPVMIKASEGGGGKGIRKVNNADDFPNLFRQVQAEVPGSPIFVMRLAKQSRHL) contacts ATP. Mg(2+)-binding residues include glutamate 423, glutamate 436, and asparagine 438. Positions 423, 436, and 438 each coordinate Mn(2+). Arginine 440 is a catalytic residue. Position 609 is a phosphothreonine (threonine 609). The Biotinyl-binding domain maps to 744 to 818 (FEKENDPSVM…DPGCVIAKMQ (75 aa)). Lysine 785 carries the N6-biotinyllysine modification. Phosphoserine is present on residues serine 834, serine 1200, serine 1215, and serine 1217. The residue at position 1226 (threonine 1226) is a Phosphothreonine. Residues serine 1258, serine 1262, and serine 1272 each carry the phosphoserine modification. Lysine 1333 carries the post-translational modification N6-acetyllysine. A CoA carboxyltransferase N-terminal domain is found at 1575-1913 (PYVTKDLLQS…SVHSSVPLLN (339 aa)). Residues 1575 to 2233 (PYVTKDLLQS…EDLVKKKIHN (659 aa)) form a carboxyltransferase region. Arginine 1822, lysine 2126, and arginine 2128 together coordinate CoA. Positions 1917 to 2233 (PIDRIIEFVP…EDLVKKKIHN (317 aa)) constitute a CoA carboxyltransferase C-terminal domain. Threonine 2152 bears the Phosphothreonine mark.

As to quaternary structure, monomer, homodimer, and homotetramer. Can form filamentous polymers. Interacts in its inactive phosphorylated form with the BRCT domains of BRCA1 which prevents ACACA dephosphorylation and inhibits lipid synthesis. Interacts with MID1IP1; interaction with MID1IP1 promotes oligomerization and increases its activity. Mg(2+) is required as a cofactor. Requires Mn(2+) as cofactor. Biotin serves as cofactor. Post-translationally, phosphorylation on Ser-1262 is required for interaction with BRCA1. Phosphorylation at Ser-79 by AMPK inactivates enzyme activity. In terms of processing, the biotin cofactor is covalently attached to the central biotinyl-binding domain and is required for the catalytic activity.

It localises to the cytoplasm. The protein resides in the cytosol. It carries out the reaction hydrogencarbonate + acetyl-CoA + ATP = malonyl-CoA + ADP + phosphate + H(+). It functions in the pathway lipid metabolism; malonyl-CoA biosynthesis; malonyl-CoA from acetyl-CoA: step 1/1. With respect to regulation, inhibited by phosphorylation. Citrate promotes oligomerization of the protein into filaments that correspond to the most active form of the carboxylase. Functionally, cytosolic enzyme that catalyzes the carboxylation of acetyl-CoA to malonyl-CoA, the first and rate-limiting step of de novo fatty acid biosynthesis. This is a 2 steps reaction starting with the ATP-dependent carboxylation of the biotin carried by the biotin carboxyl carrier (BCC) domain followed by the transfer of the carboxyl group from carboxylated biotin to acetyl-CoA. This is Acetyl-CoA carboxylase 1 from Mus musculus (Mouse).